The following is a 947-amino-acid chain: Bifunctional glutamine synthetase adenylyltransferase/adenylyl-removing enzyme (947 aa).

The segment at 1 to 440 (MTPLSSPLSQ…VFNELIGDDE (440 aa)) is adenylyl removase. The adenylyl transferase stretch occupies residues 450 to 947 (SEPWREVWQD…ASWRKWLVAV (498 aa)).

The protein belongs to the GlnE family. The cofactor is Mg(2+).

It carries out the reaction [glutamine synthetase]-O(4)-(5'-adenylyl)-L-tyrosine + phosphate = [glutamine synthetase]-L-tyrosine + ADP. The catalysed reaction is [glutamine synthetase]-L-tyrosine + ATP = [glutamine synthetase]-O(4)-(5'-adenylyl)-L-tyrosine + diphosphate. Its function is as follows. Involved in the regulation of glutamine synthetase GlnA, a key enzyme in the process to assimilate ammonia. When cellular nitrogen levels are high, the C-terminal adenylyl transferase (AT) inactivates GlnA by covalent transfer of an adenylyl group from ATP to specific tyrosine residue of GlnA, thus reducing its activity. Conversely, when nitrogen levels are low, the N-terminal adenylyl removase (AR) activates GlnA by removing the adenylyl group by phosphorolysis, increasing its activity. The regulatory region of GlnE binds the signal transduction protein PII (GlnB) which indicates the nitrogen status of the cell. The chain is Bifunctional glutamine synthetase adenylyltransferase/adenylyl-removing enzyme from Salmonella enteritidis PT4 (strain P125109).